A 296-amino-acid polypeptide reads, in one-letter code: Formamidopyrimidine-DNA glycosylase (296 aa).

Proline 2 (schiff-base intermediate with DNA) is an active-site residue. Glutamate 3 functions as the Proton donor in the catalytic mechanism. The active-site Proton donor; for beta-elimination activity is the lysine 61. Residues histidine 104, arginine 123, and lysine 169 each coordinate DNA. The segment at 255 to 289 (DAYGREGEPCRRCGAIMRREKFMNRSSFYCPRCQP) adopts an FPG-type zinc-finger fold. Arginine 279 acts as the Proton donor; for delta-elimination activity in catalysis.

It belongs to the FPG family. Monomer. Zn(2+) is required as a cofactor.

The enzyme catalyses Hydrolysis of DNA containing ring-opened 7-methylguanine residues, releasing 2,6-diamino-4-hydroxy-5-(N-methyl)formamidopyrimidine.. The catalysed reaction is 2'-deoxyribonucleotide-(2'-deoxyribose 5'-phosphate)-2'-deoxyribonucleotide-DNA = a 3'-end 2'-deoxyribonucleotide-(2,3-dehydro-2,3-deoxyribose 5'-phosphate)-DNA + a 5'-end 5'-phospho-2'-deoxyribonucleoside-DNA + H(+). Involved in base excision repair of DNA damaged by oxidation or by mutagenic agents. Acts as a DNA glycosylase that recognizes and removes damaged bases. Has a preference for oxidized purines, such as 7,8-dihydro-8-oxoguanine (8-oxoG). Has AP (apurinic/apyrimidinic) lyase activity and introduces nicks in the DNA strand. Cleaves the DNA backbone by beta-delta elimination to generate a single-strand break at the site of the removed base with both 3'- and 5'-phosphates. In Mycobacterium sp. (strain JLS), this protein is Formamidopyrimidine-DNA glycosylase.